Here is a 348-residue protein sequence, read N- to C-terminus: D-erythrose-4-phosphate dehydrogenase (348 aa).

NAD(+) is bound by residues 12-13 (RI) and Arg81. Substrate is bound by residues 154 to 156 (SCT), Arg200, 213 to 214 (TK), and Arg236. Cys155 functions as the Nucleophile in the catalytic mechanism. Asn318 is an NAD(+) binding site.

The protein belongs to the glyceraldehyde-3-phosphate dehydrogenase family. Epd subfamily. Homotetramer.

The protein resides in the cytoplasm. The enzyme catalyses D-erythrose 4-phosphate + NAD(+) + H2O = 4-phospho-D-erythronate + NADH + 2 H(+). It functions in the pathway cofactor biosynthesis; pyridoxine 5'-phosphate biosynthesis; pyridoxine 5'-phosphate from D-erythrose 4-phosphate: step 1/5. Its function is as follows. Catalyzes the NAD-dependent conversion of D-erythrose 4-phosphate to 4-phosphoerythronate. In Salmonella schwarzengrund (strain CVM19633), this protein is D-erythrose-4-phosphate dehydrogenase.